The following is a 453-amino-acid chain: GTPase Der (453 aa).

EngA-type G domains follow at residues 3-167 (PIIV…ISEK) and 187-360 (IKVA…EDSK). GTP contacts are provided by residues 9 to 16 (GRTNVGKS), 57 to 61 (DTAGL), 119 to 122 (NKID), 193 to 200 (GRPNVGKS), 240 to 244 (DTAGA), and 305 to 308 (NKCD). The 85-residue stretch at 361–445 (RKISTSTLIK…PIQIQFKDNE (85 aa)) folds into the KH-like domain.

It belongs to the TRAFAC class TrmE-Era-EngA-EngB-Septin-like GTPase superfamily. EngA (Der) GTPase family. As to quaternary structure, associates with the 50S ribosomal subunit.

Its function is as follows. GTPase that plays an essential role in the late steps of ribosome biogenesis. This Buchnera aphidicola subsp. Acyrthosiphon pisum (strain 5A) protein is GTPase Der.